The sequence spans 287 residues: Protease HtpX (287 aa).

A run of 2 helical transmembrane segments spans residues 4–24 and 33–53; these read IFLL…VMSI and GGLL…SLAI. A Zn(2+)-binding site is contributed by His-139. Glu-140 is a catalytic residue. His-143 is a binding site for Zn(2+). Helical transmembrane passes span 154–174 and 195–215; these read LIQG…AGII and AVVF…VAYF. Glu-220 is a binding site for Zn(2+).

It belongs to the peptidase M48B family. The cofactor is Zn(2+).

Its subcellular location is the cell inner membrane. This is Protease HtpX from Shewanella baltica (strain OS185).